The following is a 143-amino-acid chain: Snake venom vascular endothelial growth factor toxin (143 aa).

A signal peptide spans 1 to 24 (MAAYLLAVAILFCIQGWPSATVQG). The residue at position 25 (Q25) is a Pyrrolidone carboxylic acid. 3 disulfide bridges follow: C38-C80, C69-C115, and C73-C117. Positions 115–143 (CECRPRSPGDVNNGRNPEEGEPRARFPFV) are disordered. The span at 130-143 (NPEEGEPRARFPFV) shows a compositional bias: basic and acidic residues.

It belongs to the PDGF/VEGF growth factor family. Snake venom VEGF subfamily. As to quaternary structure, homodimer; disulfide-linked. Interacts with VEGF receptor-2 (KDR). In terms of processing, the N-terminus is blocked for N-terminal sequencing, suggesting a Pyrrolidone carboxylic acid at Gln-25. As to expression, expressed by the venom gland.

It localises to the secreted. Its function is as follows. Snake venom VEGFs that may contribute to venom dispersion and prey subjugation by inducing vascular permeability and hypotension. This protein induces an increase in capillary permeability when intradermally injected into mice. Also provokes a drastic hypotensive effect after intravenous injection. The hypotension is mediated by nitric oxide (NO), which is produced by VEGF-activated endothelium NO synthase. Also induces angiogenesis in vitro. Unlike other crotalid VEGFs, this protein interacts with VEGF receptor-2 (KDR) with a high affinity (Kd=413 pM), whereas no interaction is detected with VEGF receptor-1 (FLT1). This chain is Snake venom vascular endothelial growth factor toxin, found in Protobothrops jerdonii (Jerdon's pitviper).